The sequence spans 427 residues: MLDPRLFRTQLEETARQLGRRGFVLDTAAFGALEERRKALQVETQNLQNERNSRSRSIGQAKARGEDIEPLLAAVQGLGERLKENEAELASIQERMEALLLGVPNLLDTDVPEGRSEADNVEIRRWGEPPQFDFEPKDHVDLAVGLGCADFEAAAKLSGSRFVVLTGPLARLQRALTQFMLDIHTGEHGYIETYVPFLVNADSLRGTGQLPKFEEDLFKVQHEPVFYLIPTAEVPVTNLVRDEIVEEERLPLKYVCHTPCFRSEAGSYGRDVRGLIRQHQFEKVELVQIVRPEDSREAHEALTRHAEVILERLGLPYRRVLLCAGDTGFSSAKTYDLEVWLPGQQSYREISSCSNFRDFQARRLQARWRNPETGKPELVHTLNGSGLAVGRTLVAVLENCQDEAGRIRVPEVLVPYMGGVNLIGPAA.

231-233 (TAE) contributes to the L-serine binding site. 262 to 264 (RSE) is a binding site for ATP. Glu-285 serves as a coordination point for L-serine. ATP is bound at residue 349–352 (EISS). Residue Ser-385 coordinates L-serine.

Belongs to the class-II aminoacyl-tRNA synthetase family. Type-1 seryl-tRNA synthetase subfamily. Homodimer. The tRNA molecule binds across the dimer.

It localises to the cytoplasm. The catalysed reaction is tRNA(Ser) + L-serine + ATP = L-seryl-tRNA(Ser) + AMP + diphosphate + H(+). The enzyme catalyses tRNA(Sec) + L-serine + ATP = L-seryl-tRNA(Sec) + AMP + diphosphate + H(+). It participates in aminoacyl-tRNA biosynthesis; selenocysteinyl-tRNA(Sec) biosynthesis; L-seryl-tRNA(Sec) from L-serine and tRNA(Sec): step 1/1. Functionally, catalyzes the attachment of serine to tRNA(Ser). Is also able to aminoacylate tRNA(Sec) with serine, to form the misacylated tRNA L-seryl-tRNA(Sec), which will be further converted into selenocysteinyl-tRNA(Sec). The chain is Serine--tRNA ligase from Methylococcus capsulatus (strain ATCC 33009 / NCIMB 11132 / Bath).